We begin with the raw amino-acid sequence, 324 residues long: Viral cathepsin (324 aa).

Residues 1–16 (MNKIVLYLLVYGATLG) form the signal peptide. The propeptide at 17-113 (AAYDLLKAPS…VVLDRPPDKG (97 aa)) is activation peptide. Intrachain disulfides connect cysteine 134–cysteine 175, cysteine 168–cysteine 208, and cysteine 263–cysteine 311. Residue cysteine 137 is part of the active site. Asparagine 159 carries N-linked (GlcNAc...) asparagine; by host glycosylation. Catalysis depends on residues histidine 270 and asparagine 290.

Belongs to the peptidase C1 family. Post-translationally, synthesized as an inactive proenzyme and activated by proteolytic removal of the inhibitory propeptide.

It carries out the reaction Endopeptidase of broad specificity, hydrolyzing substrates of both cathepsin L and cathepsin B.. In terms of biological role, cysteine protease that plays an essential role in host liquefaction to facilitate horizontal transmission of the virus. May participate in the degradation of foreign protein expressed by the baculovirus system. This is Viral cathepsin (VCATH) from Antheraea pernyi nuclear polyhedrosis virus (ApNPV).